The chain runs to 463 residues: Xanthone prenyltransferase B (463 aa).

The protein belongs to the tryptophan dimethylallyltransferase family.

Its pathway is secondary metabolite biosynthesis. Its activity is regulated as follows. Mn(2+) and Co(2+) strongly enhance prenylation activity. Dehydrogenase involved in the conversion of monodictyphenone to the prenyl xanthones such as emericellin, shamixanthone and epishamixanthone. Monodictyphenone is first converted to variecoxanthone A via a paeciloxanthone intermediate by the consecutive actions of the FAD-dependent monooxygenase mdpD and the xanthone prenyltransferase xptB. XptB catalyzes regular O-prenylation at the hydroxy group of C-7 of the xanthone ring. Variecoxanthone A is further prenylated to emericellin by xptA before being reduced to shamixanthone and epishamixanthone by the dehydrogenase xptC. This Emericella nidulans (strain FGSC A4 / ATCC 38163 / CBS 112.46 / NRRL 194 / M139) (Aspergillus nidulans) protein is Xanthone prenyltransferase B.